The primary structure comprises 263 residues: L-aspartate dehydrogenase (263 aa).

2 residues coordinate NAD(+): alanine 120 and asparagine 186. Histidine 216 is a catalytic residue.

This sequence belongs to the L-aspartate dehydrogenase family.

It catalyses the reaction L-aspartate + NADP(+) + H2O = oxaloacetate + NH4(+) + NADPH + H(+). It carries out the reaction L-aspartate + NAD(+) + H2O = oxaloacetate + NH4(+) + NADH + H(+). Its pathway is cofactor biosynthesis; NAD(+) biosynthesis; iminoaspartate from L-aspartate (dehydrogenase route): step 1/1. In terms of biological role, specifically catalyzes the NAD or NADP-dependent dehydrogenation of L-aspartate to iminoaspartate. In Psychrobacter cryohalolentis (strain ATCC BAA-1226 / DSM 17306 / VKM B-2378 / K5), this protein is L-aspartate dehydrogenase.